We begin with the raw amino-acid sequence, 1285 residues long: Ataxin-2 (1285 aa).

3 disordered regions span residues 1 to 85 (MRSS…PGSR), 111 to 178 (ARAC…SPGA), and 197 to 224 (PVAS…GLPQ). The segment covering 29–38 (SLPRTARRGG) has biased composition (basic residues). The span at 48-65 (AGPPPRGPGAPPRGPRSP) shows a compositional bias: pro residues. Residues 128–144 (SSSARPAPGCPRPACEP) show a composition bias toward low complexity. Gly residues predominate over residues 205 to 214 (AGGGRPGLGR). Residues Ser-218 and Ser-219 each carry the phosphoserine modification. Positions 237–314 (RMVHILTSVV…FVVVQFKDTD (78 aa)) constitute a Sm domain. 2 positions are modified to phosphoserine: Ser-362 and Ser-435. 2 stretches are compositionally biased toward basic and acidic residues: residues 428–440 (ALEN…EEKY) and 447–461 (CSDR…RDNK). 2 disordered regions span residues 428-925 (ALEN…HQQP) and 1111-1191 (AALH…QSSF). Ser-477 carries the post-translational modification Phosphoserine. Residues 498–510 (ASHTSDFNPNAGS) show a composition bias toward polar residues. The residue at position 523 (Ser-523) is a Phosphoserine. Residues 526 to 552 (PSHSSRPPSRYQSGPNSLPPRAATHTR) are compositionally biased toward low complexity. The span at 554–567 (PSRPPSRPSRPPSH) shows a compositional bias: pro residues. Ser-593 is subject to Phosphoserine. The segment covering 596 to 606 (AQRHPRNHRVS) has biased composition (basic residues). Arg-609 bears the Asymmetric dimethylarginine; alternate mark. Arg-609 carries the omega-N-methylarginine; alternate modification. A phosphoserine mark is found at Ser-611 and Ser-653. Polar residues predominate over residues 662 to 672 (PRQSSIGNSPS). The segment covering 685 to 694 (PAEAVSMPVP) has biased composition (low complexity). Residue Ser-697 is modified to Phosphoserine. Residue Thr-710 is modified to Phosphothreonine. The segment covering 737 to 746 (ASETSPSFSK) has biased composition (polar residues). Ser-741 and Ser-753 each carry phosphoserine. Residues 757-773 (SEHRKQIDDLKKFKNDF) are compositionally biased toward basic and acidic residues. The segment covering 776–789 (QPSSTSESMDQLLS) has biased composition (polar residues). A compositionally biased stretch (basic and acidic residues) spans 790–813 (KNREGEKSRDLIKDKTEASAKDSF). Residues 814-838 (IDSSSSSSNCTSGSSKTNSPSISPS) show a composition bias toward low complexity. Phosphoserine occurs at positions 827, 828, 832, 836, 838, 859, and 860. Residues 851–862 (VTSQGVQTSSPA) are compositionally biased toward polar residues. Lys-864 is covalently cross-linked (Glycyl lysine isopeptide (Lys-Gly) (interchain with G-Cter in SUMO2)). Positions 864 to 881 (KQEKDDREEKKDTTEQVR) are enriched in basic and acidic residues. Low complexity-rich tracts occupy residues 896–907 (SFSQPKPSTTPT) and 1128–1165 (GQQQ…QQSA).

This sequence belongs to the ataxin-2 family. In terms of assembly, interacts with RBFOX1. Monomer. Can also form homodimers. Interacts with polyribosomes. Interacts with EGFR. Interacts with SH3GL3. Interacts with SH3GL2, SH3KBP1 and CBL. Interacts with ATXN2L. Expressed in the heart, lung, liver, kidney, skeletal muscle, spleen and intestine. Predominant expression was seen in the brain where a high level expression was found in the pyramidal cortical neurons, large brain stem neurons and cerebellar Purkinje cells. All three isoforms were found in all the tissues except skeletal muscle where only isoform 1 was found.

The protein resides in the cytoplasm. In terms of biological role, involved in EGFR trafficking, acting as negative regulator of endocytic EGFR internalization at the plasma membrane. The sequence is that of Ataxin-2 (Atxn2) from Mus musculus (Mouse).